The primary structure comprises 356 residues: Histidine biosynthesis bifunctional protein HisB (356 aa).

The tract at residues 1 to 166 (MSKKVLFIDR…AICNYLTSLN (166 aa)) is histidinol-phosphatase. The active-site Nucleophile is Asp-9. Asp-9 and Asp-11 together coordinate Mg(2+). Residue Asp-11 is the Proton donor of the active site. Positions 93, 95, 101, and 103 each coordinate Zn(2+). Asp-130 contacts Mg(2+). Positions 167–356 (RYAHVKRITK…VLPSSKGVLS (190 aa)) are imidazoleglycerol-phosphate dehydratase.

This sequence in the N-terminal section; belongs to the histidinol-phosphatase family. In the C-terminal section; belongs to the imidazoleglycerol-phosphate dehydratase family. Mg(2+) is required as a cofactor. It depends on Zn(2+) as a cofactor.

It is found in the cytoplasm. It carries out the reaction D-erythro-1-(imidazol-4-yl)glycerol 3-phosphate = 3-(imidazol-4-yl)-2-oxopropyl phosphate + H2O. It catalyses the reaction L-histidinol phosphate + H2O = L-histidinol + phosphate. It functions in the pathway amino-acid biosynthesis; L-histidine biosynthesis; L-histidine from 5-phospho-alpha-D-ribose 1-diphosphate: step 6/9. Its pathway is amino-acid biosynthesis; L-histidine biosynthesis; L-histidine from 5-phospho-alpha-D-ribose 1-diphosphate: step 8/9. This is Histidine biosynthesis bifunctional protein HisB from Baumannia cicadellinicola subsp. Homalodisca coagulata.